The following is a 453-amino-acid chain: Allantoinase (453 aa).

His-59, His-61, Lys-146, His-186, His-242, and Asp-315 together coordinate Zn(2+). Lys-146 carries the N6-carboxylysine modification.

Belongs to the metallo-dependent hydrolases superfamily. Allantoinase family. As to quaternary structure, homotetramer. Requires Zn(2+) as cofactor. Post-translationally, carboxylation allows a single lysine to coordinate two zinc ions.

The catalysed reaction is (S)-allantoin + H2O = allantoate + H(+). The protein operates within nitrogen metabolism; (S)-allantoin degradation; allantoate from (S)-allantoin: step 1/1. Its function is as follows. Catalyzes the conversion of allantoin (5-ureidohydantoin) to allantoic acid by hydrolytic cleavage of the five-member hydantoin ring. This is Allantoinase from Escherichia coli (strain K12 / MC4100 / BW2952).